The following is a 461-amino-acid chain: tRNA modification GTPase MnmE (461 aa).

3 residues coordinate (6S)-5-formyl-5,6,7,8-tetrahydrofolate: lysine 32, glutamate 89, and lysine 128. Residues 224–387 form the TrmE-type G domain; that stretch reads GHALSIVGKP…LSQKISEFFP (164 aa). Asparagine 234 serves as a coordination point for K(+). Residues 234 to 239, 253 to 259, and 278 to 281 each bind GTP; these read NAGKSS, SDIKGTT, and DTAG. Serine 238 serves as a coordination point for Mg(2+). Serine 253, isoleucine 255, and threonine 258 together coordinate K(+). Threonine 259 contacts Mg(2+). Residue lysine 461 participates in (6S)-5-formyl-5,6,7,8-tetrahydrofolate binding.

This sequence belongs to the TRAFAC class TrmE-Era-EngA-EngB-Septin-like GTPase superfamily. TrmE GTPase family. Homodimer. Heterotetramer of two MnmE and two MnmG subunits. K(+) is required as a cofactor.

The protein resides in the cytoplasm. Its function is as follows. Exhibits a very high intrinsic GTPase hydrolysis rate. Involved in the addition of a carboxymethylaminomethyl (cmnm) group at the wobble position (U34) of certain tRNAs, forming tRNA-cmnm(5)s(2)U34. The sequence is that of tRNA modification GTPase MnmE from Helicobacter pylori (strain J99 / ATCC 700824) (Campylobacter pylori J99).